The sequence spans 195 residues: Transcriptional regulator LdrP (195 aa).

Residues 110 to 182 (GELRARIARY…YRRVYLLDLA (73 aa)) form the HTH crp-type domain. Positions 142-161 (HEEIADATASIRESVSKVLA) form a DNA-binding region, H-T-H motif.

Functionally, activates transcription. Positively regulates PcrtB promoter upstream of the crtB operon in a cAMP-independent manner. Regulated genes include genes encoding DNA photolyase, phytoene synthase and cytochrome P450 monooxygenase, which are involved in carotenoid biosynthesis. Positively regulates the light-inducible gene cluster in the megaplasmid in a cAMP-independent manner. This chain is Transcriptional regulator LdrP, found in Thermus thermophilus (strain ATCC BAA-163 / DSM 7039 / HB27).